We begin with the raw amino-acid sequence, 269 residues long: MKKIATATIATAGFATIAIASGNQAHASEQDNYGYNPNDPTSYSYTYTIDAQGNYHYTWKGNWHPSQLNQDNGYYSYYYYNGYNNYSYNNYNNGYSYNNYSRYNNYSNNNQSYNYNNYNSYNTNSYRTGGLGASYSTSSNNVQVTTTMAPSSNGRSISSGYTSGRNLYTSGQCTYYVFDRVGGKIGSTWGNASNWANAAARAGYTVNNTPKAGAIMQTTQGAYGHVAYVESVNNNGSVRVSEMNYGYGPGVVTSRTISASQAAGYNFIH.

An N-terminal signal peptide occupies residues 1–27; it reads MKKIATATIATAGFATIAIASGNQAHA. Repeat copies occupy residues 83 to 85, 88 to 90, 91 to 93, 97 to 99, 103 to 105, 106 to 108, and 115 to 117. Residues 83–115 form a 7 X 3 AA repeats of Y-[NS]-N region; it reads YNNYSYNNYNNGYSYNNYSRYNNYSNNNQSYNY. Residues 148-269 enclose the Peptidase C51 domain; that stretch reads MAPSSNGRSI…SQAAGYNFIH (122 aa).

It is found in the secreted. Its function is as follows. Not known; immunogenic protein. The protein is Staphylococcal secretory antigen ssaA2 (ssaA2) of Staphylococcus aureus (strain MRSA252).